The following is a 367-amino-acid chain: MTPEILPIEDYDDQLAEKTERLRGMMAPFNAPEPAVFRSPVSHYRMRAEFRIWHDGDELYHIMFDQQTKQRIRVDRFPAASELINRLMPEMLAAIQPDPVLRRKLFQIDYLSTLSGEVIVSLLYHRALNEEWQEHARALRDSLTAQGFNLQLIGRATKTKICLDRDYVDECLPVAGRNMIYRQVENSFTQPNAAVNIQMLEWALDATAGSKGDLLELYCGNGNFSLALARNFERVLATEIAKPSVAAAQYNIAANQIENVQIIRMAAEEFTQAMQGVRQFNRLQGIDLTSYQCETIFVDPPRSGLDDETVKLVQAYPRILYISCNPETLSNNLKTLSETHDIRRLALFDQFPYTHHMECGVLLEKRQ.

S-adenosyl-L-methionine is bound by residues Gln-190, Tyr-218, Asn-223, Glu-239, and Asp-299. Catalysis depends on Cys-324, which acts as the Nucleophile. Glu-358 serves as the catalytic Proton acceptor.

This sequence belongs to the class I-like SAM-binding methyltransferase superfamily. RNA M5U methyltransferase family. TrmA subfamily.

The catalysed reaction is uridine(54) in tRNA + S-adenosyl-L-methionine = 5-methyluridine(54) in tRNA + S-adenosyl-L-homocysteine + H(+). It carries out the reaction uridine(341) in tmRNA + S-adenosyl-L-methionine = 5-methyluridine(341) in tmRNA + S-adenosyl-L-homocysteine + H(+). Functionally, dual-specificity methyltransferase that catalyzes the formation of 5-methyluridine at position 54 (m5U54) in all tRNAs, and that of position 341 (m5U341) in tmRNA (transfer-mRNA). The protein is tRNA/tmRNA (uracil-C(5))-methyltransferase of Pectobacterium atrosepticum (strain SCRI 1043 / ATCC BAA-672) (Erwinia carotovora subsp. atroseptica).